The sequence spans 466 residues: 3-isopropylmalate dehydratase large subunit (466 aa).

The [4Fe-4S] cluster site is built by Cys-347, Cys-407, and Cys-410.

The protein belongs to the aconitase/IPM isomerase family. LeuC type 1 subfamily. Heterodimer of LeuC and LeuD. The cofactor is [4Fe-4S] cluster.

The catalysed reaction is (2R,3S)-3-isopropylmalate = (2S)-2-isopropylmalate. It functions in the pathway amino-acid biosynthesis; L-leucine biosynthesis; L-leucine from 3-methyl-2-oxobutanoate: step 2/4. Its function is as follows. Catalyzes the isomerization between 2-isopropylmalate and 3-isopropylmalate, via the formation of 2-isopropylmaleate. The chain is 3-isopropylmalate dehydratase large subunit from Shigella flexneri serotype 5b (strain 8401).